Reading from the N-terminus, the 140-residue chain is Gonadotropin subunit beta-2 (140 aa).

A signal peptide spans 1-23 (MGTPVKILVVLFSVIVLLAVAQS). Disulfide bonds link C29/C77, C43/C92, C46/C130, C54/C108, C58/C110, and C113/C120. N33 carries an N-linked (GlcNAc...) asparagine glycan.

Belongs to the glycoprotein hormones subunit beta family. Heterodimer of an alpha and a beta chain.

Its subcellular location is the secreted. Its function is as follows. Involved in gametogenesis and steroidogenesis. This Carassius auratus (Goldfish) protein is Gonadotropin subunit beta-2 (cgbb).